The primary structure comprises 394 residues: Elongation factor Tu (394 aa).

Residues 10 to 204 (LPHVNIGTIG…AVDEYIPTPT (195 aa)) enclose the tr-type G domain. Residues 19–26 (GHVDHGKT) form a G1 region. 19–26 (GHVDHGKT) serves as a coordination point for GTP. T26 is a Mg(2+) binding site. Residues 60–64 (GITIN) are G2. The tract at residues 81-84 (DCPG) is G3. GTP is bound by residues 81–85 (DCPGH) and 136–139 (NKCD). Residues 136 to 139 (NKCD) form a G4 region. Positions 174–176 (SAL) are G5.

The protein belongs to the TRAFAC class translation factor GTPase superfamily. Classic translation factor GTPase family. EF-Tu/EF-1A subfamily. Monomer.

It localises to the cytoplasm. It catalyses the reaction GTP + H2O = GDP + phosphate + H(+). Functionally, GTP hydrolase that promotes the GTP-dependent binding of aminoacyl-tRNA to the A-site of ribosomes during protein biosynthesis. The protein is Elongation factor Tu of Mesoplasma florum (strain ATCC 33453 / NBRC 100688 / NCTC 11704 / L1) (Acholeplasma florum).